Consider the following 83-residue polypeptide: Sulfur carrier protein TusA (83 aa).

Catalysis depends on cysteine 19, which acts as the Cysteine persulfide intermediate.

Belongs to the sulfur carrier protein TusA family.

It is found in the cytoplasm. Its function is as follows. Sulfur carrier protein which probably makes part of a sulfur-relay system. The chain is Sulfur carrier protein TusA from Aliivibrio salmonicida (strain LFI1238) (Vibrio salmonicida (strain LFI1238)).